The primary structure comprises 136 residues: NADPH-dependent 7-cyano-7-deazaguanine reductase (136 aa).

The active-site Thioimide intermediate is cysteine 53. The active-site Proton donor is aspartate 60. Residues 75–77 (VEL) and 94–95 (HE) each bind substrate.

Belongs to the GTP cyclohydrolase I family. QueF type 1 subfamily.

It localises to the cytoplasm. It catalyses the reaction 7-aminomethyl-7-carbaguanine + 2 NADP(+) = 7-cyano-7-deazaguanine + 2 NADPH + 3 H(+). It participates in tRNA modification; tRNA-queuosine biosynthesis. In terms of biological role, catalyzes the NADPH-dependent reduction of 7-cyano-7-deazaguanine (preQ0) to 7-aminomethyl-7-deazaguanine (preQ1). This is NADPH-dependent 7-cyano-7-deazaguanine reductase from Nostoc sp. (strain PCC 7120 / SAG 25.82 / UTEX 2576).